A 226-amino-acid polypeptide reads, in one-letter code: Leucyl/phenylalanyl-tRNA--protein transferase (226 aa).

This sequence belongs to the L/F-transferase family.

The protein localises to the cytoplasm. It catalyses the reaction N-terminal L-lysyl-[protein] + L-leucyl-tRNA(Leu) = N-terminal L-leucyl-L-lysyl-[protein] + tRNA(Leu) + H(+). It carries out the reaction N-terminal L-arginyl-[protein] + L-leucyl-tRNA(Leu) = N-terminal L-leucyl-L-arginyl-[protein] + tRNA(Leu) + H(+). The catalysed reaction is L-phenylalanyl-tRNA(Phe) + an N-terminal L-alpha-aminoacyl-[protein] = an N-terminal L-phenylalanyl-L-alpha-aminoacyl-[protein] + tRNA(Phe). In terms of biological role, functions in the N-end rule pathway of protein degradation where it conjugates Leu, Phe and, less efficiently, Met from aminoacyl-tRNAs to the N-termini of proteins containing an N-terminal arginine or lysine. The sequence is that of Leucyl/phenylalanyl-tRNA--protein transferase from Stutzerimonas stutzeri (strain A1501) (Pseudomonas stutzeri).